We begin with the raw amino-acid sequence, 360 residues long: DNA polymerase IV (360 aa).

The UmuC domain occupies 8-189 (IIHVDMDCFF…LPLEKIPGVG (182 aa)). The Mg(2+) site is built by D12 and D107. E108 is a catalytic residue.

The protein belongs to the DNA polymerase type-Y family. As to quaternary structure, monomer. Mg(2+) is required as a cofactor.

Its subcellular location is the cytoplasm. It carries out the reaction DNA(n) + a 2'-deoxyribonucleoside 5'-triphosphate = DNA(n+1) + diphosphate. In terms of biological role, poorly processive, error-prone DNA polymerase involved in untargeted mutagenesis. Copies undamaged DNA at stalled replication forks, which arise in vivo from mismatched or misaligned primer ends. These misaligned primers can be extended by PolIV. Exhibits no 3'-5' exonuclease (proofreading) activity. May be involved in translesional synthesis, in conjunction with the beta clamp from PolIII. This is DNA polymerase IV from Vibrio cholerae serotype O1 (strain ATCC 39541 / Classical Ogawa 395 / O395).